Here is a 204-residue protein sequence, read N- to C-terminus: Holliday junction branch migration complex subunit RuvA (204 aa).

The tract at residues 1–67 (MIDYLYGTLD…GGVISLYGFF (67 aa)) is domain I. The domain II stretch occupies residues 68 to 149 (TIEEREMYLL…TVNVLNKEKQ (82 aa)). Residues 150–154 (TGAET) form a flexible linker region. Residues 155–204 (IKNTMVSEAIAGLITLGYKMQQARVAVTNVYEHNENITLEDLIKKSLQYL) form a domain III region.

This sequence belongs to the RuvA family. In terms of assembly, homotetramer. Forms an RuvA(8)-RuvB(12)-Holliday junction (HJ) complex. HJ DNA is sandwiched between 2 RuvA tetramers; dsDNA enters through RuvA and exits via RuvB. An RuvB hexamer assembles on each DNA strand where it exits the tetramer. Each RuvB hexamer is contacted by two RuvA subunits (via domain III) on 2 adjacent RuvB subunits; this complex drives branch migration. In the full resolvosome a probable DNA-RuvA(4)-RuvB(12)-RuvC(2) complex forms which resolves the HJ.

It is found in the cytoplasm. In terms of biological role, the RuvA-RuvB-RuvC complex processes Holliday junction (HJ) DNA during genetic recombination and DNA repair, while the RuvA-RuvB complex plays an important role in the rescue of blocked DNA replication forks via replication fork reversal (RFR). RuvA specifically binds to HJ cruciform DNA, conferring on it an open structure. The RuvB hexamer acts as an ATP-dependent pump, pulling dsDNA into and through the RuvAB complex. HJ branch migration allows RuvC to scan DNA until it finds its consensus sequence, where it cleaves and resolves the cruciform DNA. This is Holliday junction branch migration complex subunit RuvA from Endomicrobium trichonymphae.